We begin with the raw amino-acid sequence, 354 residues long: Guanine nucleotide-binding protein G(i) subunit alpha (354 aa).

A lipid anchor (N-myristoyl glycine) is attached at G2. C3 is lipidated: S-palmitoyl cysteine. The G-alpha domain occupies 32–354 (REVKLLLLGA…KNNLKDCGLF (323 aa)). The tract at residues 35-48 (KLLLLGAGESGKST) is G1 motif. GTP-binding positions include 40–47 (GAGESGKS), 175–181 (LRTRVKT), 200–204 (DVGGQ), 269–272 (NKKD), and A326. Residues S47 and T181 each contribute to the Mg(2+) site. Residues 173–181 (DVLRTRVKT) form a G2 motif region. The tract at residues 196–205 (FKMFDVGGQR) is G3 motif. Residues 265-272 (ILFLNKKD) are G4 motif. A G5 motif region spans residues 324-329 (TCATDT).

It belongs to the G-alpha family. G(i/o/t/z) subfamily. As to quaternary structure, g proteins are composed of 3 units; alpha, beta and gamma. The alpha chain contains the guanine nucleotide binding site.

Guanine nucleotide-binding proteins (G proteins) are involved as modulators or transducers in various transmembrane signaling systems. The G(i) proteins are involved in hormonal regulation of adenylate cyclase: they inhibit the cyclase in response to beta-adrenergic stimuli. This chain is Guanine nucleotide-binding protein G(i) subunit alpha, found in Lymnaea stagnalis (Great pond snail).